A 513-amino-acid chain; its full sequence is HMG box-containing protein 1 (513 aa).

A disordered region spans residues 151–181 (RPPPVSSAKSGPAFPHDHWKEETPVRHERAN). Residues 165–181 (PHDHWKEETPVRHERAN) are compositionally biased toward basic and acidic residues. The AXH domain maps to 202-343 (WCNSWPSTVW…PPGHPDAINF (142 aa)). The segment at residues 433–501 (CKRPMNAFML…EQKRLNPDCW (69 aa)) is a DNA-binding region (HMG box).

As to quaternary structure, binds TCF4. Binds RB1. Binds the second PAH repeat of SIN3A. Post-translationally, ubiquitinated by the CTLH E3 ubiquitin-protein ligase complex, leading to subsequent proteasomal degradation. As to expression, highly expressed in liver, adipose tissue, lung, brain, spleen, kidney, skeletal muscle and heart.

The protein localises to the nucleus. Transcriptional repressor that binds to the promoter region of target genes. Plays a role in the regulation of the cell cycle and of the Wnt pathway. Binds preferentially to the sequence 5'-TTCATTCATTCA-3'. Binding to the histone H1.0 promoter is enhanced by interaction with RB1. Disrupts the interaction between DNA and TCF4. In Rattus norvegicus (Rat), this protein is HMG box-containing protein 1 (Hbp1).